Reading from the N-terminus, the 442-residue chain is Probable carboxypeptidase PABG_01461 (442 aa).

The first 20 residues, 1–20 (MKLQYLVALLSVQAVPPVTA), serve as a signal peptide directing secretion. The N-linked (GlcNAc...) asparagine glycan is linked to Asn102. Asp160 lines the Zn(2+) pocket. Glu192 acts as the Proton acceptor in catalysis. Residue Glu193 participates in Zn(2+) binding. N-linked (GlcNAc...) asparagine glycosylation is present at Asn343.

It belongs to the peptidase M20A family. The cofactor is Zn(2+).

Its subcellular location is the secreted. This chain is Probable carboxypeptidase PABG_01461, found in Paracoccidioides brasiliensis (strain Pb03).